The sequence spans 370 residues: 3-dehydroquinate synthase (370 aa).

NAD(+) is bound by residues G112–D116, T136–S137, K149, K158, and T176–T179. Positions 191, 254, and 276 each coordinate Zn(2+).

The protein belongs to the sugar phosphate cyclases superfamily. Dehydroquinate synthase family. Co(2+) serves as cofactor. It depends on Zn(2+) as a cofactor. The cofactor is NAD(+).

It localises to the cytoplasm. The enzyme catalyses 7-phospho-2-dehydro-3-deoxy-D-arabino-heptonate = 3-dehydroquinate + phosphate. The protein operates within metabolic intermediate biosynthesis; chorismate biosynthesis; chorismate from D-erythrose 4-phosphate and phosphoenolpyruvate: step 2/7. In terms of biological role, catalyzes the conversion of 3-deoxy-D-arabino-heptulosonate 7-phosphate (DAHP) to dehydroquinate (DHQ). The protein is 3-dehydroquinate synthase of Xanthomonas oryzae pv. oryzae (strain MAFF 311018).